The following is a 344-amino-acid chain: Ferredoxin--NADP reductase (344 aa).

The FAD site is built by S12, D31, K39, Y43, V83, I118, D285, and S326.

The protein belongs to the ferredoxin--NADP reductase type 2 family. In terms of assembly, homodimer. Requires FAD as cofactor.

It catalyses the reaction 2 reduced [2Fe-2S]-[ferredoxin] + NADP(+) + H(+) = 2 oxidized [2Fe-2S]-[ferredoxin] + NADPH. This Staphylococcus aureus (strain MW2) protein is Ferredoxin--NADP reductase.